Here is a 204-residue protein sequence, read N- to C-terminus: Endothelin-3 (204 aa).

The first 17 residues, Met1–Ala17, serve as a signal peptide directing secretion. The segment at Gly18–Ala71 is disordered. Positions Gly18–Ala80 are excised as a propeptide. 2 disulfides stabilise this stretch: Cys83-Cys97 and Cys85-Cys93. A propeptide spanning residues Ile104 to Leu204 is cleaved from the precursor. Residues Leu115–Gly140 are disordered. The span at Ser127–Gly140 shows a compositional bias: low complexity. An endothelin-like region spans residues Cys144–Cys158. The disordered stretch occupies residues Gly166–Leu204.

It belongs to the endothelin/sarafotoxin family.

The protein resides in the secreted. Functionally, endothelins are endothelium-derived vasoconstrictor peptides. The polypeptide is Endothelin-3 (EDN3) (Sus scrofa (Pig)).